A 336-amino-acid chain; its full sequence is 4-hydroxy-2-oxovalerate aldolase (336 aa).

Positions 5 to 255 (IRIIDSTLRD…ETGVDLYKIM (251 aa)) constitute a Pyruvate carboxyltransferase domain. Position 13-14 (13-14 (RD)) interacts with substrate. Position 14 (Asp14) interacts with Mn(2+). His17 functions as the Proton acceptor in the catalytic mechanism. Substrate is bound by residues Ser167 and His194. Residues His194 and His196 each coordinate Mn(2+). Tyr285 is a substrate binding site.

This sequence belongs to the 4-hydroxy-2-oxovalerate aldolase family.

It catalyses the reaction (S)-4-hydroxy-2-oxopentanoate = acetaldehyde + pyruvate. The chain is 4-hydroxy-2-oxovalerate aldolase (mhpE) from Carboxydothermus hydrogenoformans (strain ATCC BAA-161 / DSM 6008 / Z-2901).